A 305-amino-acid polypeptide reads, in one-letter code: Ornithine carbamoyltransferase (305 aa).

Residues 52–55 (STRT), Q79, R103, and 130–133 (HPLQ) contribute to the carbamoyl phosphate site. L-ornithine is bound by residues N162, D224, and 228–229 (SM). Carbamoyl phosphate-binding positions include 264–265 (CL) and R292.

The protein belongs to the aspartate/ornithine carbamoyltransferase superfamily. OTCase family.

It is found in the cytoplasm. It carries out the reaction carbamoyl phosphate + L-ornithine = L-citrulline + phosphate + H(+). It participates in amino-acid biosynthesis; L-arginine biosynthesis; L-arginine from L-ornithine and carbamoyl phosphate: step 1/3. Its function is as follows. Reversibly catalyzes the transfer of the carbamoyl group from carbamoyl phosphate (CP) to the N(epsilon) atom of ornithine (ORN) to produce L-citrulline. The polypeptide is Ornithine carbamoyltransferase (Pyrobaculum aerophilum (strain ATCC 51768 / DSM 7523 / JCM 9630 / CIP 104966 / NBRC 100827 / IM2)).